The sequence spans 163 residues: Cell division protein SepF (163 aa).

The interval 25 to 53 (SVAPHSGEERESAFSRRSAERAERTERPT) is disordered. The span at 30–51 (SGEERESAFSRRSAERAERTER) shows a compositional bias: basic and acidic residues.

This sequence belongs to the SepF family. Homodimer. Interacts with FtsZ.

The protein localises to the cytoplasm. In terms of biological role, cell division protein that is part of the divisome complex and is recruited early to the Z-ring. Probably stimulates Z-ring formation, perhaps through the cross-linking of FtsZ protofilaments. Its function overlaps with FtsA. This is Cell division protein SepF from Heliobacterium modesticaldum (strain ATCC 51547 / Ice1).